The primary structure comprises 211 residues: Large ribosomal subunit protein eL13 (211 aa).

N6-acetyllysine is present on Lys16. Ser77 and Ser106 each carry phosphoserine. Glycyl lysine isopeptide (Lys-Gly) (interchain with G-Cter in SUMO2) cross-links involve residues Lys123 and Lys145. Lys174 is covalently cross-linked (Glycyl lysine isopeptide (Lys-Gly) (interchain with G-Cter in SUMO1); alternate). Glycyl lysine isopeptide (Lys-Gly) (interchain with G-Cter in SUMO2); alternate cross-links involve residues Lys174 and Lys177. Lys177 bears the N6-acetyllysine; alternate mark.

Belongs to the eukaryotic ribosomal protein eL13 family. In terms of assembly, component of the 60S large ribosomal subunit (LSU).

The protein localises to the cytoplasm. Component of the ribosome, a large ribonucleoprotein complex responsible for the synthesis of proteins in the cell. The small ribosomal subunit (SSU) binds messenger RNAs (mRNAs) and translates the encoded message by selecting cognate aminoacyl-transfer RNA (tRNA) molecules. The large subunit (LSU) contains the ribosomal catalytic site termed the peptidyl transferase center (PTC), which catalyzes the formation of peptide bonds, thereby polymerizing the amino acids delivered by tRNAs into a polypeptide chain. The nascent polypeptides leave the ribosome through a tunnel in the LSU and interact with protein factors that function in enzymatic processing, targeting, and the membrane insertion of nascent chains at the exit of the ribosomal tunnel. As part of the LSU, it is probably required for its formation and the maturation of rRNAs. Plays a role in bone development. The chain is Large ribosomal subunit protein eL13 (RPL13) from Oryctolagus cuniculus (Rabbit).